We begin with the raw amino-acid sequence, 401 residues long: 8-amino-7-oxononanoate synthase (401 aa).

R19 is a substrate binding site. 106–107 is a pyridoxal 5'-phosphate binding site; sequence GY. Residue H131 coordinates substrate. S176, H204, and T233 together coordinate pyridoxal 5'-phosphate. N6-(pyridoxal phosphate)lysine is present on K236. T350 serves as a coordination point for substrate.

Belongs to the class-II pyridoxal-phosphate-dependent aminotransferase family. BioF subfamily. In terms of assembly, homodimer. Pyridoxal 5'-phosphate is required as a cofactor.

It carries out the reaction 6-carboxyhexanoyl-[ACP] + L-alanine + H(+) = (8S)-8-amino-7-oxononanoate + holo-[ACP] + CO2. Its pathway is cofactor biosynthesis; biotin biosynthesis. Its function is as follows. Catalyzes the decarboxylative condensation of pimeloyl-[acyl-carrier protein] and L-alanine to produce 8-amino-7-oxononanoate (AON), [acyl-carrier protein], and carbon dioxide. The chain is 8-amino-7-oxononanoate synthase from Pseudomonas paraeruginosa (strain DSM 24068 / PA7) (Pseudomonas aeruginosa (strain PA7)).